Consider the following 518-residue polypeptide: Arrestin-related trafficking adapter 10 (518 aa).

K118 participates in a covalent cross-link: Glycyl lysine isopeptide (Lys-Gly) (interchain with G-Cter in ubiquitin).

It belongs to the ART10 family. As to quaternary structure, interacts with RSP5. In terms of processing, ubiquitinated by RSP5.

It is found in the cytoplasm. May regulate endocytosis by recruiting RSP5 ubiquitin ligase activity to specific plasma membrane proteins in response to extracellular stimuli. The sequence is that of Arrestin-related trafficking adapter 10 (ART10) from Saccharomyces cerevisiae (strain Lalvin EC1118 / Prise de mousse) (Baker's yeast).